Here is a 397-residue protein sequence, read N- to C-terminus: Succinyl-diaminopimelate desuccinylase (397 aa).

H74 lines the Zn(2+) pocket. D76 is an active-site residue. Zn(2+) is bound at residue D107. Catalysis depends on E141, which acts as the Proton acceptor. Residues E142, E170, and H368 each contribute to the Zn(2+) site.

The protein belongs to the peptidase M20A family. DapE subfamily. Homodimer. Zn(2+) serves as cofactor. Co(2+) is required as a cofactor.

It catalyses the reaction N-succinyl-(2S,6S)-2,6-diaminopimelate + H2O = (2S,6S)-2,6-diaminopimelate + succinate. It participates in amino-acid biosynthesis; L-lysine biosynthesis via DAP pathway; LL-2,6-diaminopimelate from (S)-tetrahydrodipicolinate (succinylase route): step 3/3. Functionally, catalyzes the hydrolysis of N-succinyl-L,L-diaminopimelic acid (SDAP), forming succinate and LL-2,6-diaminopimelate (DAP), an intermediate involved in the bacterial biosynthesis of lysine and meso-diaminopimelic acid, an essential component of bacterial cell walls. This is Succinyl-diaminopimelate desuccinylase from Mesorhizobium japonicum (strain LMG 29417 / CECT 9101 / MAFF 303099) (Mesorhizobium loti (strain MAFF 303099)).